A 74-amino-acid chain; its full sequence is Translation initiation factor IF-1 (74 aa).

Residues 1-72 (MGKEDVIRME…TRGRIVYRKK (72 aa)) enclose the S1-like domain.

This sequence belongs to the IF-1 family. As to quaternary structure, component of the 30S ribosomal translation pre-initiation complex which assembles on the 30S ribosome in the order IF-2 and IF-3, IF-1 and N-formylmethionyl-tRNA(fMet); mRNA recruitment can occur at any time during PIC assembly.

Its subcellular location is the cytoplasm. Its function is as follows. One of the essential components for the initiation of protein synthesis. Stabilizes the binding of IF-2 and IF-3 on the 30S subunit to which N-formylmethionyl-tRNA(fMet) subsequently binds. Helps modulate mRNA selection, yielding the 30S pre-initiation complex (PIC). Upon addition of the 50S ribosomal subunit IF-1, IF-2 and IF-3 are released leaving the mature 70S translation initiation complex. The sequence is that of Translation initiation factor IF-1 from Thermotoga maritima (strain ATCC 43589 / DSM 3109 / JCM 10099 / NBRC 100826 / MSB8).